A 437-amino-acid polypeptide reads, in one-letter code: C-terminal-binding protein 2 (437 aa).

NAD(+) contacts are provided by residues serine 103, isoleucine 183–isoleucine 188, aspartate 207, cysteine 240–asparagine 246, threonine 267–arginine 269, and aspartate 293. Residue arginine 269 is part of the active site. Glutamate 298 is an active-site residue. The Proton donor role is filled by histidine 318. Histidine 318–tryptophan 321 contacts NAD(+). The interval proline 410 to glutamine 437 is disordered. Residues valine 415 to lysine 426 show a composition bias toward polar residues. Residues proline 427–glutamine 437 are compositionally biased toward basic and acidic residues.

This sequence belongs to the D-isomer specific 2-hydroxyacid dehydrogenase family. In terms of assembly, interacts with the C-terminus of tcf7l1-a via the consensus motifs P-X-[DNS]-L-[STVA].

Its subcellular location is the nucleus. Functionally, corepressor targeting diverse transcription regulators. This is C-terminal-binding protein 2 (ctbp2) from Xenopus laevis (African clawed frog).